The chain runs to 479 residues: Glycogen synthase (479 aa).

An ADP-alpha-D-glucose-binding site is contributed by Lys-15.

Belongs to the glycosyltransferase 1 family. Bacterial/plant glycogen synthase subfamily.

The enzyme catalyses [(1-&gt;4)-alpha-D-glucosyl](n) + ADP-alpha-D-glucose = [(1-&gt;4)-alpha-D-glucosyl](n+1) + ADP + H(+). It functions in the pathway glycan biosynthesis; glycogen biosynthesis. Functionally, synthesizes alpha-1,4-glucan chains using ADP-glucose. The protein is Glycogen synthase of Histophilus somni (strain 129Pt) (Haemophilus somnus).